We begin with the raw amino-acid sequence, 61 residues long: Small ribosomal subunit protein uS14 (61 aa).

Positions 24, 27, 40, and 43 each coordinate Zn(2+).

Belongs to the universal ribosomal protein uS14 family. Zinc-binding uS14 subfamily. Part of the 30S ribosomal subunit. Contacts proteins S3 and S10. Zn(2+) serves as cofactor.

Binds 16S rRNA, required for the assembly of 30S particles and may also be responsible for determining the conformation of the 16S rRNA at the A site. The protein is Small ribosomal subunit protein uS14 of Herpetosiphon aurantiacus (strain ATCC 23779 / DSM 785 / 114-95).